The primary structure comprises 228 residues: Small ribosomal subunit protein uS3 (228 aa).

In terms of domain architecture, KH type-2 spans 39–107 (VREYLQDKLK…PVHINIEEIR (69 aa)).

Belongs to the universal ribosomal protein uS3 family. Part of the 30S ribosomal subunit. Forms a tight complex with proteins S10 and S14.

In terms of biological role, binds the lower part of the 30S subunit head. Binds mRNA in the 70S ribosome, positioning it for translation. The polypeptide is Small ribosomal subunit protein uS3 (Pseudomonas syringae pv. syringae (strain B728a)).